We begin with the raw amino-acid sequence, 323 residues long: CYFIP-related Rac1 interactor A (323 aa).

Belongs to the CYRI family. In terms of assembly, interacts with RAC1 (GTP-bound form preferentially).

It is found in the membrane. Functionally, may negatively regulate RAC1 signaling and RAC1-driven cytoskeletal remodeling. May regulate chemotaxis, cell migration and epithelial polarization by controlling the polarity, plasticity, duration and extent of protrusions. This chain is CYFIP-related Rac1 interactor A (CYRIA), found in Bos taurus (Bovine).